We begin with the raw amino-acid sequence, 1676 residues long: Protein TIC 214 (1676 aa).

6 consecutive transmembrane segments (helical) span residues 24–44 (KIIN…ALAL), 70–90 (LILG…YIAF), 93–113 (PYTL…GNNL), 130–150 (LEIL…TCIF), 170–190 (MVFL…VLMC), and 218–238 (FFLV…IQSL). Composition is skewed to basic and acidic residues over residues 264 to 276 (LKKS…GKST) and 283 to 298 (SHEK…SKLE). Disordered stretches follow at residues 264–302 (LKKS…NEDE), 546–610 (LVVF…SYSI), 1123–1151 (NKQS…NLIL), and 1372–1436 (QQQN…SEDD). Residues 562 to 586 (DSGNIQNKSSDKTINPQNNLTNSKT) are compositionally biased toward polar residues. Residues 597-610 (TTEKEPKDDKSYSI) are compositionally biased toward basic and acidic residues. Positions 1123–1138 (NKQSLQKGNSKGNSNL) are enriched in polar residues. A compositionally biased stretch (low complexity) spans 1372-1390 (QQQNQTTTKINTETKNQQK). The stretch at 1384–1436 (ETKNQQKNRVENEENKETENQQNAETKNKQKSKTENEENKETENQQNDESEDD) forms a coiled coil. 2 stretches are compositionally biased toward basic and acidic residues: residues 1391 to 1402 (NRVENEENKETE) and 1409 to 1426 (TKNK…KETE).

It belongs to the TIC214 family. Part of the Tic complex.

The protein resides in the plastid. It localises to the chloroplast inner membrane. Functionally, involved in protein precursor import into chloroplasts. May be part of an intermediate translocation complex acting as a protein-conducting channel at the inner envelope. This chain is Protein TIC 214, found in Cuscuta obtusiflora (Peruvian dodder).